The sequence spans 423 residues: UDP-N-acetylglucosamine 1-carboxyvinyltransferase (423 aa).

Residue 22–23 (KN) coordinates phosphoenolpyruvate. Arginine 98 serves as a coordination point for UDP-N-acetyl-alpha-D-glucosamine. Cysteine 122 (proton donor) is an active-site residue. Cysteine 122 carries the post-translational modification 2-(S-cysteinyl)pyruvic acid O-phosphothioketal. Residues 127-131 (RPVDQ), aspartate 311, and isoleucine 333 contribute to the UDP-N-acetyl-alpha-D-glucosamine site.

Belongs to the EPSP synthase family. MurA subfamily.

It is found in the cytoplasm. It catalyses the reaction phosphoenolpyruvate + UDP-N-acetyl-alpha-D-glucosamine = UDP-N-acetyl-3-O-(1-carboxyvinyl)-alpha-D-glucosamine + phosphate. The protein operates within cell wall biogenesis; peptidoglycan biosynthesis. In terms of biological role, cell wall formation. Adds enolpyruvyl to UDP-N-acetylglucosamine. The chain is UDP-N-acetylglucosamine 1-carboxyvinyltransferase from Stenotrophomonas maltophilia (strain R551-3).